The chain runs to 192 residues: uncharacterized protein (192 aa).

One can recognise a Nudix hydrolase domain in the interval 29-160 (QRQAAVLVPV…PLDIHRRGNH (132 aa)). Positions 67 to 89 (GAVDDTDASLIAAALREAQEEVA) match the Nudix box motif. The Mg(2+) site is built by glutamate 83 and glutamate 87.

This sequence belongs to the Nudix hydrolase family. PCD1 subfamily. Mn(2+) is required as a cofactor. The cofactor is Mg(2+).

Functionally, probably mediates the hydrolysis of some nucleoside diphosphate derivatives. This is an uncharacterized protein from Cronobacter sakazakii (strain ATCC BAA-894) (Enterobacter sakazakii).